Reading from the N-terminus, the 430-residue chain is Glutamate-1-semialdehyde 2,1-aminomutase (430 aa).

Position 265 is an N6-(pyridoxal phosphate)lysine (Lys-265).

This sequence belongs to the class-III pyridoxal-phosphate-dependent aminotransferase family. HemL subfamily. In terms of assembly, homodimer. Pyridoxal 5'-phosphate serves as cofactor.

It localises to the cytoplasm. The catalysed reaction is (S)-4-amino-5-oxopentanoate = 5-aminolevulinate. It participates in porphyrin-containing compound metabolism; protoporphyrin-IX biosynthesis; 5-aminolevulinate from L-glutamyl-tRNA(Glu): step 2/2. The chain is Glutamate-1-semialdehyde 2,1-aminomutase from Shewanella baltica (strain OS195).